The following is a 100-amino-acid chain: Urease subunit gamma (100 aa).

It belongs to the urease gamma subunit family. In terms of assembly, heterotrimer of UreA (gamma), UreB (beta) and UreC (alpha) subunits. Three heterotrimers associate to form the active enzyme.

It is found in the cytoplasm. The enzyme catalyses urea + 2 H2O + H(+) = hydrogencarbonate + 2 NH4(+). It participates in nitrogen metabolism; urea degradation; CO(2) and NH(3) from urea (urease route): step 1/1. The polypeptide is Urease subunit gamma (Yersinia bercovieri).